The primary structure comprises 303 residues: Quinolinate synthase (303 aa).

Iminosuccinate-binding residues include His24 and Ser41. Cys86 provides a ligand contact to [4Fe-4S] cluster. Iminosuccinate contacts are provided by residues 112–114 and Ser129; that span reads YIN. Cys172 contacts [4Fe-4S] cluster. Residues 198–200 and Thr215 contribute to the iminosuccinate site; that span reads HPE. Cys260 serves as a coordination point for [4Fe-4S] cluster.

The protein belongs to the quinolinate synthase family. Type 2 subfamily. [4Fe-4S] cluster serves as cofactor.

It localises to the cytoplasm. The enzyme catalyses iminosuccinate + dihydroxyacetone phosphate = quinolinate + phosphate + 2 H2O + H(+). The protein operates within cofactor biosynthesis; NAD(+) biosynthesis; quinolinate from iminoaspartate: step 1/1. In terms of biological role, catalyzes the condensation of iminoaspartate with dihydroxyacetone phosphate to form quinolinate. In Caldicellulosiruptor bescii (strain ATCC BAA-1888 / DSM 6725 / KCTC 15123 / Z-1320) (Anaerocellum thermophilum), this protein is Quinolinate synthase.